The chain runs to 262 residues: Hydroxyethylthiazole kinase (262 aa).

Position 50 (methionine 50) interacts with substrate. ATP is bound by residues arginine 125 and threonine 171. A substrate-binding site is contributed by glycine 198.

This sequence belongs to the Thz kinase family. It depends on Mg(2+) as a cofactor.

It carries out the reaction 5-(2-hydroxyethyl)-4-methylthiazole + ATP = 4-methyl-5-(2-phosphooxyethyl)-thiazole + ADP + H(+). The protein operates within cofactor biosynthesis; thiamine diphosphate biosynthesis; 4-methyl-5-(2-phosphoethyl)-thiazole from 5-(2-hydroxyethyl)-4-methylthiazole: step 1/1. Functionally, catalyzes the phosphorylation of the hydroxyl group of 4-methyl-5-beta-hydroxyethylthiazole (THZ). The chain is Hydroxyethylthiazole kinase from Escherichia coli O139:H28 (strain E24377A / ETEC).